Here is a 68-residue protein sequence, read N- to C-terminus: DNA-directed RNA polymerase subunit omega (68 aa).

It belongs to the RNA polymerase subunit omega family. As to quaternary structure, the RNAP catalytic core consists of 2 alpha, 1 beta, 1 beta' and 1 omega subunit. When a sigma factor is associated with the core the holoenzyme is formed, which can initiate transcription.

It carries out the reaction RNA(n) + a ribonucleoside 5'-triphosphate = RNA(n+1) + diphosphate. Its function is as follows. Promotes RNA polymerase assembly. Latches the N- and C-terminal regions of the beta' subunit thereby facilitating its interaction with the beta and alpha subunits. This chain is DNA-directed RNA polymerase subunit omega, found in Geobacter sp. (strain M21).